The chain runs to 463 residues: L-seryl-tRNA(Sec) selenium transferase (463 aa).

Lysine 295 carries the post-translational modification N6-(pyridoxal phosphate)lysine.

The protein belongs to the SelA family. As to quaternary structure, homodecamer; pentamer of dimers. Binds only one seryl-tRNA(Sec) per dimer. Requires pyridoxal 5'-phosphate as cofactor.

It localises to the cytoplasm. It carries out the reaction L-seryl-tRNA(Sec) + selenophosphate + H(+) = L-selenocysteinyl-tRNA(Sec) + phosphate. The protein operates within aminoacyl-tRNA biosynthesis; selenocysteinyl-tRNA(Sec) biosynthesis; selenocysteinyl-tRNA(Sec) from L-seryl-tRNA(Sec) (bacterial route): step 1/1. Converts seryl-tRNA(Sec) to selenocysteinyl-tRNA(Sec) required for selenoprotein biosynthesis. This Shigella boydii serotype 4 (strain Sb227) protein is L-seryl-tRNA(Sec) selenium transferase.